We begin with the raw amino-acid sequence, 292 residues long: Nitrogenase iron protein (292 aa).

8 to 15 (GKGGIGKS) is a binding site for ATP. A [4Fe-4S] cluster-binding site is contributed by Cys96. Arg99 is modified (ADP-ribosylarginine; by dinitrogenase reductase ADP-ribosyltransferase). Residue Cys130 coordinates [4Fe-4S] cluster.

It belongs to the NifH/BchL/ChlL family. In terms of assembly, homodimer. [4Fe-4S] cluster is required as a cofactor. The reversible ADP-ribosylation of Arg-99 inactivates the nitrogenase reductase and regulates nitrogenase activity.

It catalyses the reaction N2 + 8 reduced [2Fe-2S]-[ferredoxin] + 16 ATP + 16 H2O = H2 + 8 oxidized [2Fe-2S]-[ferredoxin] + 2 NH4(+) + 16 ADP + 16 phosphate + 6 H(+). Its function is as follows. The key enzymatic reactions in nitrogen fixation are catalyzed by the nitrogenase complex, which has 2 components: the iron protein and the molybdenum-iron protein. The polypeptide is Nitrogenase iron protein (Synechococcus sp. (strain JA-3-3Ab) (Cyanobacteria bacterium Yellowstone A-Prime)).